Reading from the N-terminus, the 95-residue chain is MKTTLDLPDELMRAIKVRAAQQGRKMKDVVTELLRSGLSQTHSGAPIPTPRRVQLPLVHCGGAATREQEMTPERVAAALLDQEAQWWSGHDDAAL.

Antitoxin component of a type II toxin-antitoxin (TA) system. This Mycobacterium tuberculosis (strain CDC 1551 / Oshkosh) protein is Antitoxin VapB41 (vapB41).